Consider the following 859-residue polypeptide: Probable helicase A859L (859 aa).

Residues 178–349 (YQELQRSGRA…KNRDLFGGVA (172 aa)) form the Helicase ATP-binding domain. 191-198 (MACRCGKT) lines the ATP pocket. The DEAH box signature appears at 298-301 (DECH). In terms of domain architecture, Helicase C-terminal spans 394–553 (QIIMALAYLK…RFYEHLLNPS (160 aa)).

The protein belongs to the asfivirus helicase A859L family.

This chain is Probable helicase A859L, found in Ornithodoros (relapsing fever ticks).